Here is a 922-residue protein sequence, read N- to C-terminus: TBC1 domain family member 2A (922 aa).

A disordered region spans residues 1 to 37 (MEDAPERTPSSSESTQPPGLAREPEVVSPGDSEGCAR). The interval 1 to 168 (MEDAPERTPS…AENGPTLHLK (168 aa)) is interaction with CADH1. Polar residues predominate over residues 8–17 (TPSSSESTQP). The region spanning 43–141 (PKKLCGYLSK…WLQQLQMKRW (99 aa)) is the PH domain. Residues 228-297 (NKQAQAAAHG…KRQSNTFPFF (70 aa)) are disordered. The segment covering 262–271 (LPEKEPEDPA) has biased composition (basic and acidic residues). Residues 275–295 (PRSSVPSGPTQKPKRQSNTFP) are compositionally biased toward polar residues. Residues 298–435 (SDGLARSRTA…QKLTEDLAQP (138 aa)) are interaction with RAC1. Coiled coils occupy residues 302-333 (ARSR…ELVI), 362-417 (LELV…NHAK), and 443-476 (FLSQ…QVTK). The 193-residue stretch at 619-811 (GVPREHRPRV…RVWDAFLYEG (193 aa)) folds into the Rab-GAP TBC domain. The stretch at 869 to 904 (MKQLRQLRAAHRERLEAELRELELLKVEYLQRRASL) forms a coiled coil. Position 914 is a phosphoserine (serine 914).

In terms of assembly, interacts with activated RAC1 and CDH1.

Its subcellular location is the cytoplasm. The protein localises to the cytoplasmic vesicle. It is found in the cell junction. In terms of biological role, acts as a GTPase-activating protein for RAB7A. Signal effector acting as a linker between RAC1 and RAB7A, leading to RAB7A inactivation and subsequent inhibition of cadherin degradation and reduced cell-cell adhesion. The chain is TBC1 domain family member 2A (Tbc1d2) from Mus musculus (Mouse).